The chain runs to 191 residues: Abscisic acid receptor PYR1 (191 aa).

Residues Tyr-23 to Glu-176 form an START-like region. Residue Lys-59 participates in abscisate binding. Position 78 is a phosphothreonine; by CARK1 (Thr-78). A Gate loop motif is present at residues Ser-85–Ala-89. Abscisate is bound by residues Ala-89–Glu-94, Arg-116–Ser-122, and Glu-141. A Latch loop motif is present at residues His-115–Leu-117.

It belongs to the PYR/PYL/RCAR abscisic acid intracellular receptor family. Homodimer. Binds ABA on one subunit only. Interacts with HAB1, AHG3, ABI1 and ABI2 when complexed to ABA, and possibly with other PP2Cs. Binds to CARs protein in an ABA-independent manner, both at the plasma membrane and in the nucleus. Interacts directly with CAR1 and CAR4. Interacts with CARK1 in the cytosol. Interacts with AIP1 in an abscisic acid-dependent manner. Interacts with FREE1 (via N-terminus). Interacts with the E3 ubiquitin-protein ligase RSL1 at the plasma membrane. Post-translationally, ubiquitynated and degraded by the proteasome upon binding to the E3 ubiquitin-protein ligase RSL1 at the plasma membrane. In terms of processing, phosphorylated by CARK1 especially in response to abscisic acid (ABA); this phosphorylation promotes its stability and inhibitory ability to ABI1.

It localises to the cytoplasm. Its subcellular location is the cytosol. It is found in the nucleus. The protein localises to the cell membrane. The protein resides in the vacuole. In terms of biological role, receptor for abscisic acid (ABA) required for ABA-mediated responses such as stomatal closure and germination inhibition. Inhibits the activity of group-A protein phosphatases type 2C (PP2Cs) when activated by ABA. Can be activated by both (-)-ABA and (+)-ABA. Promotes drought tolerance. The chain is Abscisic acid receptor PYR1 from Arabidopsis thaliana (Mouse-ear cress).